The primary structure comprises 363 residues: Pyruvate dehydrogenase E1 component subunit alpha, mitochondrial (363 aa).

A mitochondrion-targeting transit peptide spans 1 to 2 (RN). Residue K36 is modified to N6-acetyllysine; alternate. N6-succinyllysine; alternate is present on K36. Pyruvate is bound by residues H65, Y91, R92, A130, G138, V140, D169, G170, A171, N198, and Y200. Residues Y91 and R92 each coordinate thiamine diphosphate. The thiamine diphosphate site is built by G138, V140, D169, G170, A171, and N198. D169 contacts Mg(2+). Residues N198 and Y200 each coordinate Mg(2+). At S205 the chain carries Phosphoserine; by PDK1. The residue at position 217 (K217) is an N6-acetyllysine; alternate. N6-succinyllysine; alternate is present on K217. An N6-acetyllysine modification is found at K240. K250 is subject to N6-succinyllysine. Residue H265 coordinates thiamine diphosphate. S266 is modified (phosphoserine; by PDK1, PDK2, PDK3 and PDK4). Position 268 is a phosphoserine (S268). S273 is modified (phosphoserine; by PDK1, PDK2, PDK3 and PDK4). Y274 carries the post-translational modification Phosphotyrosine. Residue K286 is modified to N6-acetyllysine; alternate. The residue at position 286 (K286) is an N6-succinyllysine; alternate. K294 and K309 each carry N6-acetyllysine. K358 carries the N6-succinyllysine modification.

As to quaternary structure, heterotetramer of two PDHA1 and two PDHB subunits. The heterotetramer interacts with DLAT, and is part of the multimeric pyruvate dehydrogenase complex that contains multiple copies of pyruvate dehydrogenase (E1), dihydrolipoamide acetyltransferase (DLAT, E2) and lipoamide dehydrogenase (DLD, E3). These subunits are bound to an inner core composed of about 48 DLAT and 12 PDHX molecules. It depends on thiamine diphosphate as a cofactor. Requires Mg(2+) as cofactor. Phosphorylation at Ser-205, Ser-266 and Ser-273 by PDK family kinases inactivates the enzyme; for this phosphorylation at a single site is sufficient. Phosphorylation at Ser-266 interferes with access to active site, and thereby inactivates the enzyme. Dephosphorylation at all three sites, i.e. at Ser-205, Ser-266 and Ser-273, is required for reactivation. Post-translationally, acetylation alters the phosphorylation pattern. Deacetylated by SIRT3.

The protein resides in the mitochondrion matrix. It catalyses the reaction N(6)-[(R)-lipoyl]-L-lysyl-[protein] + pyruvate + H(+) = N(6)-[(R)-S(8)-acetyldihydrolipoyl]-L-lysyl-[protein] + CO2. With respect to regulation, pyruvate dehydrogenase activity is inhibited by phosphorylation of PDHA1; it is reactivated by dephosphorylation. In terms of biological role, the pyruvate dehydrogenase complex catalyzes the overall conversion of pyruvate to acetyl-CoA and CO(2), and thereby links the glycolytic pathway to the tricarboxylic cycle. This chain is Pyruvate dehydrogenase E1 component subunit alpha, mitochondrial (PDHA), found in Sminthopsis macroura (Stripe-faced dunnart).